A 221-amino-acid polypeptide reads, in one-letter code: GTP cyclohydrolase III (221 aa).

It belongs to the archaeal-type GTP cyclohydrolase family.

The enzyme catalyses GTP + 3 H2O = 2-amino-5-formylamino-6-(5-phospho-D-ribosylamino)pyrimidin-4(3H)-one + 2 phosphate + 2 H(+). In terms of biological role, catalyzes the formation of 2-amino-5-formylamino-6-ribofuranosylamino-4(3H)-pyrimidinone ribonucleotide monophosphate and inorganic phosphate from GTP. Also has an independent pyrophosphate phosphohydrolase activity. The chain is GTP cyclohydrolase III from Pyrobaculum aerophilum (strain ATCC 51768 / DSM 7523 / JCM 9630 / CIP 104966 / NBRC 100827 / IM2).